Reading from the N-terminus, the 59-residue chain is Large ribosomal subunit protein uL30 (59 aa).

Belongs to the universal ribosomal protein uL30 family. Part of the 50S ribosomal subunit.

This chain is Large ribosomal subunit protein uL30, found in Solibacter usitatus (strain Ellin6076).